Reading from the N-terminus, the 180-residue chain is Negative modulator of initiation of replication (180 aa).

The interval 87-88 (AV) is interaction with DNA.

The protein belongs to the SeqA family. As to quaternary structure, homodimer. Polymerizes to form helical filaments.

Its subcellular location is the cytoplasm. Negative regulator of replication initiation, which contributes to regulation of DNA replication and ensures that replication initiation occurs exactly once per chromosome per cell cycle. Binds to pairs of hemimethylated GATC sequences in the oriC region, thus preventing assembly of replication proteins and re-initiation at newly replicated origins. Repression is relieved when the region becomes fully methylated. In Ferrimonas balearica (strain DSM 9799 / CCM 4581 / KCTC 23876 / PAT), this protein is Negative modulator of initiation of replication.